A 534-amino-acid polypeptide reads, in one-letter code: MEPAEDLQKVFDKAFAGMREAREAFAPSLAPREVGTITSIATGIAKVSGLPGVGFDELVKFPGDLFGIAFNVDEAEIGVVLLGEYWHLHAGDEVDRTGRVMDVAVGDGLLGRVIDPLGRPLDGRGPVASSHRLPIERPASPIMDRAPVTVPLQTGLKVIDALIPVGRGQRELILGDRQTGKTAIAIDTILNQQGQNVLCVYCAIGQRASAVAKVVATLREKGAMDFTTVVVTEGNDPPGLAYIAPYAATSIAEHFMEAGRDVLIVYDDLTQHARAYRELSLLLRRPPGREAFPGDIFYIHSRLLERATHLRQERGGGSLTALPIIETQAQNISAYIPTNLISITDGQIYLSPSLFELGVLPAVDVGKSVSRVGGKAQRTAYRAVAGDLKLAYAQFEELETFARFGARLDENTTKIIEHGRRIRACLKQPESAPVSVAAQIAVLLALSAELFDGVELNQMTEAEQAVRAAAADMPAEVRARFDSADKLSDEDREAIIQIARVALASFQPAPEPETAPKTKTDIKPKPKAAGGESS.

175–182 contacts ATP; sequence GDRQTGKT. Positions 506-534 are disordered; it reads FQPAPEPETAPKTKTDIKPKPKAAGGESS. The segment covering 514-524 has biased composition (basic and acidic residues); the sequence is TAPKTKTDIKP.

This sequence belongs to the ATPase alpha/beta chains family. F-type ATPases have 2 components, CF(1) - the catalytic core - and CF(0) - the membrane proton channel. CF(1) has five subunits: alpha(3), beta(3), gamma(1), delta(1), epsilon(1). CF(0) has three main subunits: a(1), b(2) and c(9-12). The alpha and beta chains form an alternating ring which encloses part of the gamma chain. CF(1) is attached to CF(0) by a central stalk formed by the gamma and epsilon chains, while a peripheral stalk is formed by the delta and b chains.

Its subcellular location is the cell inner membrane. The enzyme catalyses ATP + H2O + 4 H(+)(in) = ADP + phosphate + 5 H(+)(out). In terms of biological role, produces ATP from ADP in the presence of a proton gradient across the membrane. The alpha chain is a regulatory subunit. The sequence is that of ATP synthase subunit alpha 2 from Albidiferax ferrireducens (strain ATCC BAA-621 / DSM 15236 / T118) (Rhodoferax ferrireducens).